Reading from the N-terminus, the 398-residue chain is Succinate--CoA ligase [ADP-forming] subunit beta (398 aa).

Positions Lys-9 to Glu-253 constitute an ATP-grasp domain. Residues Lys-50, Gly-57–Gly-59, Val-106, and Glu-116 contribute to the ATP site. Asn-208 and Asp-222 together coordinate Mg(2+). Substrate contacts are provided by residues Asn-273 and Gly-330–Val-332.

This sequence belongs to the succinate/malate CoA ligase beta subunit family. As to quaternary structure, heterotetramer of two alpha and two beta subunits. It depends on Mg(2+) as a cofactor.

The enzyme catalyses succinate + ATP + CoA = succinyl-CoA + ADP + phosphate. The catalysed reaction is GTP + succinate + CoA = succinyl-CoA + GDP + phosphate. Its pathway is carbohydrate metabolism; tricarboxylic acid cycle; succinate from succinyl-CoA (ligase route): step 1/1. Its function is as follows. Succinyl-CoA synthetase functions in the citric acid cycle (TCA), coupling the hydrolysis of succinyl-CoA to the synthesis of either ATP or GTP and thus represents the only step of substrate-level phosphorylation in the TCA. The beta subunit provides nucleotide specificity of the enzyme and binds the substrate succinate, while the binding sites for coenzyme A and phosphate are found in the alpha subunit. The sequence is that of Succinate--CoA ligase [ADP-forming] subunit beta from Christiangramia forsetii (strain DSM 17595 / CGMCC 1.15422 / KT0803) (Gramella forsetii).